A 584-amino-acid polypeptide reads, in one-letter code: uncharacterized protein (584 aa).

Disordered regions lie at residues 151–188 (EHPP…DNDL), 222–243 (KRKE…SRAN), 399–418 (SETP…PPDF), and 433–584 (MQPS…AKSD). Residues 159–188 (TSSEKTRSENRERKKRWREQNEERNKDNDL) are compositionally biased toward basic and acidic residues. Residues 231–243 (LSQNQSSNASRAN) are compositionally biased toward low complexity. Composition is skewed to polar residues over residues 399–409 (SETPTPVSGNG), 433–453 (MQPS…SSEM), 483–500 (NAVT…SGSP), 511–531 (NYSQ…SSLP), and 572–584 (QRSS…AKSD).

This is an uncharacterized protein from Schizosaccharomyces pombe (strain 972 / ATCC 24843) (Fission yeast).